Here is a 788-residue protein sequence, read N- to C-terminus: Endonuclease MutS2 (788 aa).

ATP is bound at residue 332-339; sequence GPNTGGKT. The Smr domain occupies 713 to 788; sequence VDLRGMDAEE…GTGVTVVEIK (76 aa).

The protein belongs to the DNA mismatch repair MutS family. MutS2 subfamily. In terms of assembly, homodimer. Binds to stalled ribosomes, contacting rRNA.

Its function is as follows. Endonuclease that is involved in the suppression of homologous recombination and thus may have a key role in the control of bacterial genetic diversity. Functionally, acts as a ribosome collision sensor, splitting the ribosome into its 2 subunits. Detects stalled/collided 70S ribosomes which it binds and splits by an ATP-hydrolysis driven conformational change. Acts upstream of the ribosome quality control system (RQC), a ribosome-associated complex that mediates the extraction of incompletely synthesized nascent chains from stalled ribosomes and their subsequent degradation. Probably generates substrates for RQC. This Clostridium botulinum (strain 657 / Type Ba4) protein is Endonuclease MutS2.